The chain runs to 363 residues: Eukaryotic translation initiation factor 3 subunit H (363 aa).

The region spanning 13-163 (VQVEALVVMK…LRAFRLSTAF (151 aa)) is the MPN domain.

The protein belongs to the eIF-3 subunit H family. As to quaternary structure, component of the eukaryotic translation initiation factor 3 (eIF-3) complex.

It localises to the cytoplasm. Its function is as follows. Component of the eukaryotic translation initiation factor 3 (eIF-3) complex, which is involved in protein synthesis of a specialized repertoire of mRNAs and, together with other initiation factors, stimulates binding of mRNA and methionyl-tRNAi to the 40S ribosome. The eIF-3 complex specifically targets and initiates translation of a subset of mRNAs involved in cell proliferation. The chain is Eukaryotic translation initiation factor 3 subunit H from Pyricularia oryzae (strain 70-15 / ATCC MYA-4617 / FGSC 8958) (Rice blast fungus).